We begin with the raw amino-acid sequence, 344 residues long: Microcin C7 self-immunity protein MccF (344 aa).

The protein belongs to the peptidase S66 family.

Involved in specific self-immunity to microcin C7. The sequence is that of Microcin C7 self-immunity protein MccF (mccF) from Escherichia coli.